Reading from the N-terminus, the 508-residue chain is Protection of telomeres protein tpz1 (508 aa).

A pot1-binding region spans residues 2–223 (SNCLKHPWLE…ENTTHGIYLE (222 aa)). Disordered stretches follow at residues 159 to 178 (QEAS…NSRD), 235 to 269 (VSET…PSLP), and 282 to 358 (PPPF…QSHR). Residues 327–347 (STEQLNSSLTIERSQSIQSTD) show a composition bias toward polar residues. Residues 348-358 (SKQRVETQSHR) show a composition bias toward basic and acidic residues. Residues 379–508 (TIDDSTGKLL…KKIEEFRNKS (130 aa)) form a ccq1/poz1-binding region.

In terms of assembly, interacts with ccq1, pot1 and poz1.

It is found in the chromosome. It localises to the telomere. The protein resides in the nucleus. Its function is as follows. Telomeric DNA-binding protein that is required to protect the 3'-end telomeric overhang and involved in telomere length regulation. recruits poz1 and ccq1 to telomeres, regulating telomere length negatively and positively respectively. This is Protection of telomeres protein tpz1 (tpz1) from Schizosaccharomyces pombe (strain 972 / ATCC 24843) (Fission yeast).